The following is a 188-amino-acid chain: Elongation factor P (188 aa).

It belongs to the elongation factor P family.

It localises to the cytoplasm. It participates in protein biosynthesis; polypeptide chain elongation. Functionally, involved in peptide bond synthesis. Stimulates efficient translation and peptide-bond synthesis on native or reconstituted 70S ribosomes in vitro. Probably functions indirectly by altering the affinity of the ribosome for aminoacyl-tRNA, thus increasing their reactivity as acceptors for peptidyl transferase. This is Elongation factor P from Wolbachia sp. subsp. Drosophila simulans (strain wRi).